We begin with the raw amino-acid sequence, 856 residues long: DNA endonuclease RBBP8 (856 aa).

The essential for binding to the MRN complex and for RPA focus formation on DNA damage stretch occupies residues 25-48 (ELWSKLKECHDKDLQELLMKIGKL). Coiled-coil stretches lie at residues 38–87 (LQEL…EDRL) and 120–141 (ITEL…SEQL). Disordered stretches follow at residues 143 to 174 (DMQK…DSPL) and 423 to 456 (DSEQ…DKEN). Positions 156-168 (ENPADTGDGEDGV) are enriched in acidic residues. The damage-recruitment motif stretch occupies residues 493–515 (SSSRTKLTISLVPEKPDTKTILH). Residues 695–732 (SPSQSISCKERSDIPSIENKKITSEKEHESKGEPYQKQ) are disordered. The span at 702-730 (CKERSDIPSIENKKITSEKEHESKGEPYQ) shows a compositional bias: basic and acidic residues. Residue Thr806 is modified to Phosphothreonine. Thr818 bears the Phosphothreonine; by ATR mark.

It belongs to the COM1/SAE2/CtIP family. As to quaternary structure, homotetramer; formed by antiparallel association of helical extensions protruding from the N-termini of two parallel coiled-coil dimers. Interacts with the MRN complex; the interaction links DNA sensing to resection. Interacts with samhd1. In terms of processing, phosphorylation at Thr-818 by atr promotes recruitment to double-strand breaks (DSBs).

It localises to the nucleus. Its subcellular location is the chromosome. Its function is as follows. Endonuclease that cooperates with the MRE11-RAD50-NBN (MRN) complex in DNA-end resection, the first step of double-strand break (DSB) repair through the homologous recombination (HR) pathway. Functions downstream of the MRN complex and ATM, promotes ATR activation and its recruitment to DSBs in the S/G2 phase facilitating the generation of ssDNA. Specifically promotes the endonuclease activity of the MRN complex to clear DNA ends containing protein adducts: recruited to DSBs by nbn following phosphorylation, and promotes the endonuclease of mre11 to clear protein-DNA adducts and generate clean double-strand break ends. The MRN complex and rbbp8/CtIP are also required for chromosome alignment during metaphase. The protein is DNA endonuclease RBBP8 (rbbp8) of Xenopus laevis (African clawed frog).